The chain runs to 593 residues: NADH-quinone oxidoreductase subunit C/D (593 aa).

Residues 1 to 184 (MTADNALYIP…DPYSLTLAKQ (184 aa)) are NADH dehydrogenase I subunit C. Positions 208–593 (DYMFLNLGPN…IDFVMADVDR (386 aa)) are NADH dehydrogenase I subunit D.

This sequence in the N-terminal section; belongs to the complex I 30 kDa subunit family. It in the C-terminal section; belongs to the complex I 49 kDa subunit family. As to quaternary structure, NDH-1 is composed of 13 different subunits. Subunits NuoB, CD, E, F, and G constitute the peripheral sector of the complex.

It is found in the cell inner membrane. The enzyme catalyses a quinone + NADH + 5 H(+)(in) = a quinol + NAD(+) + 4 H(+)(out). Its function is as follows. NDH-1 shuttles electrons from NADH, via FMN and iron-sulfur (Fe-S) centers, to quinones in the respiratory chain. The immediate electron acceptor for the enzyme in this species is believed to be ubiquinone. Couples the redox reaction to proton translocation (for every two electrons transferred, four hydrogen ions are translocated across the cytoplasmic membrane), and thus conserves the redox energy in a proton gradient. This Pseudomonas syringae pv. syringae (strain B728a) protein is NADH-quinone oxidoreductase subunit C/D.